Reading from the N-terminus, the 771-residue chain is Glucocorticoid receptor (771 aa).

Positions 1 to 415 are modulating; it reads MDLKESVTSS…STTTGPPPKL (415 aa). Residue threonine 8 is modified to Phosphothreonine. Arginine 22 is subject to Omega-N-methylarginine. Residues serine 44, serine 133, serine 199, serine 207, and serine 222 each carry the phosphoserine modification. Polar residues predominate over residues 129–172; that stretch reads SRSTSVPENPKNSASAVSGTPTEEFPKTQSDLSSEQENLKSQAG. A disordered region spans residues 129 to 184; the sequence is SRSTSVPENPKNSASAVSGTPTEEFPKTQSDLSSEQENLKSQAGTNGGNVKFPPDQ. Lysine 254 participates in a covalent cross-link: Glycyl lysine isopeptide (Lys-Gly) (interchain with G-Cter in SUMO2). Residue serine 263 is modified to Phosphoserine. Glycyl lysine isopeptide (Lys-Gly) (interchain with G-Cter in SUMO); alternate cross-links involve residues lysine 273 and lysine 289. Glycyl lysine isopeptide (Lys-Gly) (interchain with G-Cter in SUMO2); alternate cross-links involve residues lysine 273 and lysine 289. Phosphoserine occurs at positions 303 and 400. The segment at 390–411 is disordered; the sequence is SSPGLRPDVSSPPSSSSTTTGP. Over residues 400 to 409 the composition is skewed to low complexity; that stretch reads SPPSSSSTTT. Lysine 414 participates in a covalent cross-link: Glycyl lysine isopeptide (Lys-Gly) (interchain with G-Cter in ubiquitin). 2 consecutive NR C4-type zinc fingers follow at residues 416–436 and 452–476; these read CLVC…CGSC and CAGR…YRKC. The nuclear receptor DNA-binding region spans 416–481; the sequence is CLVCSDELSG…RYRKCLQAGM (66 aa). Residues lysine 475, lysine 487, lysine 489, and lysine 490 each carry the N6-acetyllysine modification. The interval 480–771 is interaction with CLOCK; that stretch reads GMNLQARKTK…DIKKLLFHQK (292 aa). The segment at 482–517 is hinge; it reads NLQARKTKKKIKGIQQATTGVSQNTSENPNKTIVPA. One can recognise an NR LBD domain in the interval 518–752; it reads TLPQLTPTLV…FPEMLAEIIT (235 aa). The segment at 526 to 691 is interaction with CRY1; that stretch reads LVSLLEVIEP…EIRMTYIKEL (166 aa). A Glycyl lysine isopeptide (Lys-Gly) (interchain with G-Cter in SUMO) cross-link involves residue lysine 697.

It belongs to the nuclear hormone receptor family. NR3 subfamily. Heteromultimeric cytoplasmic complex with HSP90AA1, HSPA1A/HSPA1B, and FKBP5 or another immunophilin such as PPID, STIP1, or the immunophilin homolog PPP5C. Upon ligand binding FKBP5 dissociates from the complex and FKBP4 takes its place, thereby linking the complex to dynein and mediating transport to the nucleus, where the complex dissociates. Probably forms a complex composed of chaperones HSP90 and HSP70, co-chaperones CDC37, PPP5C, TSC1 and client protein TSC2, CDK4, AKT, RAF1 and NR3C1; this complex does not contain co-chaperones STIP1/HOP and PTGES3/p23. Directly interacts with UNC45A. Binds to DNA as a homodimer, and as heterodimer with NR3C2 or the retinoid X receptor. Binds STAT5A and STAT5B homodimers and heterodimers. Interacts with NRIP1, POU2F1, POU2F2 and TRIM28. Interacts with several coactivator complexes, including the SMARCA4 complex, CREBBP/EP300, TADA2L (Ada complex) and p160 coactivators such as NCOA2 and NCOA6. Interaction with BAG1 inhibits transactivation. Interacts with HEXIM1 and TGFB1I1. Interacts with NCOA1. Interacts with NCOA3, SMARCA4, SMARCC1, SMARCD1, and SMARCE1. Interacts with CLOCK, CRY1 and CRY2 in a ligand-dependent fashion. Interacts with CIART. Interacts with RWDD3. Interacts with UBE2I/UBC9 and this interaction is enhanced in the presence of RWDD3. Interacts with GRIP1. Interacts with NR4A3 (via nuclear receptor DNA-binding domain), represses transcription activity of NR4A3 on the POMC promoter Nur response element (NurRE). Directly interacts with PNRC2 to attract and form a complex with UPF1 and DCP1A; the interaction leads to rapid mRNA degradation. Interacts with GSK3B. Interacts with FNIP1 and FNIP2. Interacts (via C-terminus) with HNRNPU (via C-terminus). Interacts with MCM3AP. Interacts (via domain NR LBD) with HSP90AA1 and HSP90AB1. In the absence of hormonal ligand, interacts with TACC1. Interacts (via NR LBD domain) with ZNF764 (via KRAB domain); the interaction regulates transcription factor activity of NR3C1 by directing its actions toward certain biologic pathways. Acetylation by CLOCK reduces its binding to glucocorticoid response elements and its transcriptional activity. Post-translationally, increased proteasome-mediated degradation in response to glucocorticoids. In terms of processing, phosphorylated in the absence of hormone; becomes hyperphosphorylated in the presence of glucocorticoid. The Ser-199, Ser-222 and Ser-400-phosphorylated forms are mainly cytoplasmic, and the Ser-207-phosphorylated form is nuclear. Phosphorylation at Ser-207 increases transcriptional activity. Phosphorylation at Ser-199, Ser-222 and Ser-400 decreases signaling capacity. Phosphorylation at Ser-400 may protect from glucocorticoid-induced apoptosis. Phosphorylation at Ser-199 and Ser-207 is not required in regulation of chromosome segregation. May be dephosphorylated by PPP5C, attenuates NR3C1 action. Ubiquitinated by UBR5, leading to its degradation: UBR5 specifically recognizes and binds ligand-bound NR3C1 when it is not associated with coactivators (NCOAs). In presence of NCOAs, the UBR5-degron is not accessible, preventing its ubiquitination and degradation. Post-translationally, sumoylation at Lys-273 and Lys-289 negatively regulates its transcriptional activity. Sumoylation at Lys-697 positively regulates its transcriptional activity in the presence of RWDD3. Sumoylation at Lys-273 and Lys-289 is dispensable whereas sumoylation at Lys-697 is critical for the stimulatory effect of RWDD3 on its transcriptional activity. Heat shock increases sumoylation in a RWDD3-dependent manner.

The protein resides in the cytoplasm. It is found in the nucleus. It localises to the mitochondrion. Its subcellular location is the cytoskeleton. The protein localises to the spindle. The protein resides in the microtubule organizing center. It is found in the centrosome. It localises to the chromosome. Its subcellular location is the nucleoplasm. Its function is as follows. Receptor for glucocorticoids (GC). Has a dual mode of action: as a transcription factor that binds to glucocorticoid response elements (GRE), both for nuclear and mitochondrial DNA, and as a modulator of other transcription factors. Affects inflammatory responses, cellular proliferation and differentiation in target tissues. Involved in chromatin remodeling. Plays a role in rapid mRNA degradation by binding to the 5' UTR of target mRNAs and interacting with PNRC2 in a ligand-dependent manner which recruits the RNA helicase UPF1 and the mRNA-decapping enzyme DCP1A, leading to RNA decay. Could act as a coactivator for STAT5-dependent transcription upon growth hormone (GH) stimulation and could reveal an essential role of hepatic GR in the control of body growth. Mediates glucocorticoid-induced apoptosis. Promotes accurate chromosome segregation during mitosis. May act as a tumor suppressor. May play a negative role in adipogenesis through the regulation of lipolytic and antilipogenic gene expression. The sequence is that of Glucocorticoid receptor (NR3C1) from Cavia porcellus (Guinea pig).